The chain runs to 177 residues: Probetacellulin (177 aa).

Residues 1-31 (MDPTAPGSSVSSLPLLLVLALGLAILHCVVA) form the signal peptide. Over 32–118 (DGNTTRTPET…LFYLQQDRGQ (87 aa)) the chain is Extracellular. N-linked (GlcNAc...) asparagine glycosylation is found at N34, N42, and N52. The 41-residue stretch at 65–105 (HFSRCPKQYKHYCIHGRCRFVVDEQTPSCICEKGYFGARCE) folds into the EGF-like domain. Cystine bridges form between C69-C82, C77-C93, and C95-C104. The propeptide at 112–177 (LQQDRGQILV…SEDIQETNIA (66 aa)) is removed in mature form. A helical membrane pass occupies residues 119-139 (ILVVCLIVVMVVFIILVIGVC). Residues 140 to 177 (TCCHPLRKHRKKKKEEKMETLDKDKTPISEDIQETNIA) are Cytoplasmic-facing. Residues 153-177 (KEEKMETLDKDKTPISEDIQETNIA) form a disordered region. Residues 154-167 (EEKMETLDKDKTPI) are compositionally biased toward basic and acidic residues.

In terms of assembly, monomer. Interacts with EGFR and ERBB4. Found in several mouse tissues including kidney, uterus and liver, as well as in beta tumor cell line and MCF-7 cells. It is not detected in the brain.

It localises to the secreted. The protein localises to the extracellular space. It is found in the cell membrane. Its function is as follows. Growth factor that binds to EGFR, ERBB4 and other EGF receptor family members. Potent mitogen for retinal pigment epithelial cells and vascular smooth muscle cells. This chain is Probetacellulin (Btc), found in Mus musculus (Mouse).